A 540-amino-acid chain; its full sequence is Protein dml-1 (540 aa).

The segment at 517–540 (NELAEMADEYHEGWSSGSDDGDDD) is disordered.

Belongs to the misato family.

It localises to the mitochondrion. Involved in the partitioning of the mitochondrial organelle and mitochondrial DNA (mtDNA) inheritance. This is Protein dml-1 (dml-1) from Neurospora crassa (strain ATCC 24698 / 74-OR23-1A / CBS 708.71 / DSM 1257 / FGSC 987).